A 154-amino-acid chain; its full sequence is Egg-lysin (154 aa).

A signal peptide spans Met1–Ser18.

Homodimer. In terms of tissue distribution, sperm.

Its function is as follows. Dissolves the egg vitelline layer nonenzymatically during fertilization. It creates a hole of about 3 mu-m in diameter through which the sperm pass. This chain is Egg-lysin, found in Haliotis sorenseni (White abalone).